The sequence spans 109 residues: MKRHSTLFLFTLLTLTTVPAQADIIDDTIGNIQQAINDASNPDRGRDYEDSRDDGWQREVSDDRRRQYDDRRRQFEDRRRQLDDRQHQLNQERRQLEDEERRMEDEYGQ.

Residues Met-1 to Ala-22 form the signal peptide. The interval Ile-36 to Gln-109 is disordered. Residues Asn-41–Gln-109 show a composition bias toward basic and acidic residues.

This is an uncharacterized protein from Escherichia coli O157:H7.